We begin with the raw amino-acid sequence, 469 residues long: ATP synthase subunit beta (469 aa).

Residue 153–160 (GGAGVGKT) participates in ATP binding.

Belongs to the ATPase alpha/beta chains family. In terms of assembly, F-type ATPases have 2 components, CF(1) - the catalytic core - and CF(0) - the membrane proton channel. CF(1) has five subunits: alpha(3), beta(3), gamma(1), delta(1), epsilon(1). CF(0) has three main subunits: a(1), b(2) and c(9-12). The alpha and beta chains form an alternating ring which encloses part of the gamma chain. CF(1) is attached to CF(0) by a central stalk formed by the gamma and epsilon chains, while a peripheral stalk is formed by the delta and b chains.

It localises to the cell membrane. It carries out the reaction ATP + H2O + 4 H(+)(in) = ADP + phosphate + 5 H(+)(out). In terms of biological role, produces ATP from ADP in the presence of a proton gradient across the membrane. The catalytic sites are hosted primarily by the beta subunits. The protein is ATP synthase subunit beta of Pediococcus pentosaceus (strain ATCC 25745 / CCUG 21536 / LMG 10740 / 183-1w).